A 147-amino-acid polypeptide reads, in one-letter code: 16 kDa phloem protein 2 (147 aa).

The C2 domain occupies 1-103 (MPHGTLEVVL…FVEGSIPPTA (103 aa)). Positions 20, 26, 73, 75, and 81 each coordinate Ca(2+). The segment at 126–147 (ENRSRGMDEESYGGWKNSEASY) is disordered.

Requires Ca(2+) as cofactor.

Its function is as follows. Binds to both sense and antisense RNA. Can also bind sheared DNA and dodecamer DNA with a low affinity. Interacts with mesophyll plasmodesmata to mediate its own cell-to-cell transport and potentiate RNA trafficking. May play a role in plant defense signaling. This is 16 kDa phloem protein 2 from Arabidopsis thaliana (Mouse-ear cress).